A 437-amino-acid chain; its full sequence is Ribosomal protein uS12 methylthiotransferase RimO (437 aa).

The MTTase N-terminal domain maps to 4–114 (PRVSFVSLGC…VMSAVHEAVP (111 aa)). 6 residues coordinate [4Fe-4S] cluster: C13, C49, C78, C145, C149, and C152. A Radical SAM core domain is found at 131-369 (LTPRHYAYLK…MAKQQQISTN (239 aa)). Residues 372-437 (KKKVGKRLPV…DAYDLHGIAV (66 aa)) form the TRAM domain.

The protein belongs to the methylthiotransferase family. RimO subfamily. [4Fe-4S] cluster is required as a cofactor.

It localises to the cytoplasm. It catalyses the reaction L-aspartate(89)-[ribosomal protein uS12]-hydrogen + (sulfur carrier)-SH + AH2 + 2 S-adenosyl-L-methionine = 3-methylsulfanyl-L-aspartate(89)-[ribosomal protein uS12]-hydrogen + (sulfur carrier)-H + 5'-deoxyadenosine + L-methionine + A + S-adenosyl-L-homocysteine + 2 H(+). In terms of biological role, catalyzes the methylthiolation of an aspartic acid residue of ribosomal protein uS12. This is Ribosomal protein uS12 methylthiotransferase RimO from Brucella anthropi (strain ATCC 49188 / DSM 6882 / CCUG 24695 / JCM 21032 / LMG 3331 / NBRC 15819 / NCTC 12168 / Alc 37) (Ochrobactrum anthropi).